The sequence spans 216 residues: Invasion protein InvF (216 aa).

An HTH araC/xylS-type domain is found at 112 to 210 (YWLVGYLLAQ…GVSPRKLSNI (99 aa)). DNA-binding regions (H-T-H motif) lie at residues 129–150 (RMLG…SRAL) and 177–200 (ITQL…KELI).

Functionally, transcriptional regulator required for the expression of several genes encoding type III secretion system SPI1 effector proteins. The interaction with SicA is necessary for the activation of sigDE (sopB pipC), sicAsipBCDA, and sopE. The sequence is that of Invasion protein InvF (invF) from Salmonella typhi.